The chain runs to 422 residues: Probable tRNA pseudouridine synthase D (422 aa).

Aspartate 83 acts as the Nucleophile in catalysis. Residues 164–386 (GFPNYFGSQR…AGGRRELLIK (223 aa)) form the TRUD domain.

This sequence belongs to the pseudouridine synthase TruD family.

The catalysed reaction is uridine(13) in tRNA = pseudouridine(13) in tRNA. Could be responsible for synthesis of pseudouridine from uracil-13 in transfer RNAs. The polypeptide is Probable tRNA pseudouridine synthase D (Thermococcus sibiricus (strain DSM 12597 / MM 739)).